The sequence spans 234 residues: Large ribosomal subunit protein uL1 (234 aa).

This sequence belongs to the universal ribosomal protein uL1 family. Part of the 50S ribosomal subunit.

Binds directly to 23S rRNA. The L1 stalk is quite mobile in the ribosome, and is involved in E site tRNA release. Functionally, protein L1 is also a translational repressor protein, it controls the translation of the L11 operon by binding to its mRNA. The sequence is that of Large ribosomal subunit protein uL1 from Anaeromyxobacter dehalogenans (strain 2CP-C).